The sequence spans 117 residues: MTVQSNNKLASQVCEACHVDAPKVSDEELKELIGLIPDWVPQVRDNVMMLEREYKFKNYKLAWAFANKVSELAESEFHHPSILLEWGKVTVTWWTHSIGGLHKNDFICAAKTDQLGD.

Belongs to the pterin-4-alpha-carbinolamine dehydratase family.

The catalysed reaction is (4aS,6R)-4a-hydroxy-L-erythro-5,6,7,8-tetrahydrobiopterin = (6R)-L-erythro-6,7-dihydrobiopterin + H2O. This is Putative pterin-4-alpha-carbinolamine dehydratase from Colwellia psychrerythraea (strain 34H / ATCC BAA-681) (Vibrio psychroerythus).